The primary structure comprises 51 residues: Mitochondrial import receptor subunit TOM5 homolog (51 aa).

Met-1 bears the N-acetylmethionine mark. A Glycyl lysine isopeptide (Lys-Gly) (interchain with G-Cter in SUMO2) cross-link involves residue Lys-10. The helical transmembrane segment at 27–45 (SIRNFLIYVALLRVTPYIL) threads the bilayer.

The protein belongs to the Tom5 family. In terms of assembly, forms part of the preprotein translocase complex of the outer mitochondrial membrane (TOM complex) which consists of at least 7 different proteins (TOMM5, TOMM6, TOMM7, TOMM20, TOMM22, TOMM40 and TOMM70).

It is found in the mitochondrion outer membrane. The protein is Mitochondrial import receptor subunit TOM5 homolog of Mus musculus (Mouse).